We begin with the raw amino-acid sequence, 145 residues long: Transcription antitermination protein NusB (145 aa).

This sequence belongs to the NusB family.

Involved in transcription antitermination. Required for transcription of ribosomal RNA (rRNA) genes. Binds specifically to the boxA antiterminator sequence of the ribosomal RNA (rrn) operons. This Geotalea daltonii (strain DSM 22248 / JCM 15807 / FRC-32) (Geobacter daltonii) protein is Transcription antitermination protein NusB.